The chain runs to 302 residues: Putative F-box protein At1g32420 (302 aa).

Basic and acidic residues predominate over residues 1–10 (MKRGNEENNH). Residues 1-27 (MKRGNEENNHKTSSSSSTQRLSRRKIS) are disordered. The F-box domain occupies 31–78 (KSGNVNIPLDLTVEILKKLPAKSLLRFQCVSKQWLSIISSRRDFIDSI).

The polypeptide is Putative F-box protein At1g32420 (Arabidopsis thaliana (Mouse-ear cress)).